The sequence spans 256 residues: 1-(5-phosphoribosyl)-5-[(5-phosphoribosylamino)methylideneamino] imidazole-4-carboxamide isomerase (256 aa).

Asp-8 (proton acceptor) is an active-site residue. Asp-129 functions as the Proton donor in the catalytic mechanism.

This sequence belongs to the HisA/HisF family.

The protein resides in the cytoplasm. It carries out the reaction 1-(5-phospho-beta-D-ribosyl)-5-[(5-phospho-beta-D-ribosylamino)methylideneamino]imidazole-4-carboxamide = 5-[(5-phospho-1-deoxy-D-ribulos-1-ylimino)methylamino]-1-(5-phospho-beta-D-ribosyl)imidazole-4-carboxamide. It participates in amino-acid biosynthesis; L-histidine biosynthesis; L-histidine from 5-phospho-alpha-D-ribose 1-diphosphate: step 4/9. The polypeptide is 1-(5-phosphoribosyl)-5-[(5-phosphoribosylamino)methylideneamino] imidazole-4-carboxamide isomerase (Synechococcus sp. (strain WH7803)).